The sequence spans 313 residues: tRNA uridine(34) hydroxylase (313 aa).

The Rhodanese domain maps to 127–225 (SDPDTILIDT…YLETVPEEES (99 aa)). Cys185 (cysteine persulfide intermediate) is an active-site residue.

This sequence belongs to the TrhO family.

The catalysed reaction is uridine(34) in tRNA + AH2 + O2 = 5-hydroxyuridine(34) in tRNA + A + H2O. In terms of biological role, catalyzes oxygen-dependent 5-hydroxyuridine (ho5U) modification at position 34 in tRNAs. The polypeptide is tRNA uridine(34) hydroxylase (Gluconobacter oxydans (strain 621H) (Gluconobacter suboxydans)).